A 337-amino-acid chain; its full sequence is tRNA N6-adenosine threonylcarbamoyltransferase (337 aa).

Positions 110 and 114 each coordinate Fe cation. Substrate-binding positions include 132–136 (VVSGG), D165, G178, D182, and N268. D293 is a Fe cation binding site.

Belongs to the KAE1 / TsaD family. Fe(2+) serves as cofactor.

The protein resides in the cytoplasm. It catalyses the reaction L-threonylcarbamoyladenylate + adenosine(37) in tRNA = N(6)-L-threonylcarbamoyladenosine(37) in tRNA + AMP + H(+). Functionally, required for the formation of a threonylcarbamoyl group on adenosine at position 37 (t(6)A37) in tRNAs that read codons beginning with adenine. Is involved in the transfer of the threonylcarbamoyl moiety of threonylcarbamoyl-AMP (TC-AMP) to the N6 group of A37, together with TsaE and TsaB. TsaD likely plays a direct catalytic role in this reaction. In Sulfurihydrogenibium sp. (strain YO3AOP1), this protein is tRNA N6-adenosine threonylcarbamoyltransferase.